Consider the following 168-residue polypeptide: Xanthine-guanine phosphoribosyltransferase (168 aa).

Residues 43 to 44 and 102 to 110 contribute to the 5-phospho-alpha-D-ribose 1-diphosphate site; these read RG and DDLVDTGAT. D103 is a Mg(2+) binding site. D106 and I149 together coordinate guanine. Xanthine contacts are provided by D106 and I149. GMP-binding positions include 106-110 and 148-149; these read DTGAT and WI.

The protein belongs to the purine/pyrimidine phosphoribosyltransferase family. XGPT subfamily. As to quaternary structure, homotetramer. Mg(2+) serves as cofactor.

Its subcellular location is the cell inner membrane. The enzyme catalyses GMP + diphosphate = guanine + 5-phospho-alpha-D-ribose 1-diphosphate. The catalysed reaction is XMP + diphosphate = xanthine + 5-phospho-alpha-D-ribose 1-diphosphate. It carries out the reaction IMP + diphosphate = hypoxanthine + 5-phospho-alpha-D-ribose 1-diphosphate. Its pathway is purine metabolism; GMP biosynthesis via salvage pathway; GMP from guanine: step 1/1. The protein operates within purine metabolism; XMP biosynthesis via salvage pathway; XMP from xanthine: step 1/1. Its function is as follows. Purine salvage pathway enzyme that catalyzes the transfer of the ribosyl-5-phosphate group from 5-phospho-alpha-D-ribose 1-diphosphate (PRPP) to the N9 position of the 6-oxopurines guanine and xanthine to form the corresponding ribonucleotides GMP (guanosine 5'-monophosphate) and XMP (xanthosine 5'-monophosphate), with the release of PPi. To a lesser extent, also acts on hypoxanthine. The chain is Xanthine-guanine phosphoribosyltransferase from Nitrobacter hamburgensis (strain DSM 10229 / NCIMB 13809 / X14).